The chain runs to 243 residues: 2-C-methyl-D-erythritol 4-phosphate cytidylyltransferase (243 aa).

The protein belongs to the IspD/TarI cytidylyltransferase family. IspD subfamily. In terms of assembly, homodimer.

It catalyses the reaction 2-C-methyl-D-erythritol 4-phosphate + CTP + H(+) = 4-CDP-2-C-methyl-D-erythritol + diphosphate. It functions in the pathway isoprenoid biosynthesis; isopentenyl diphosphate biosynthesis via DXP pathway; isopentenyl diphosphate from 1-deoxy-D-xylulose 5-phosphate: step 2/6. Functionally, catalyzes the formation of 4-diphosphocytidyl-2-C-methyl-D-erythritol from CTP and 2-C-methyl-D-erythritol 4-phosphate (MEP). The chain is 2-C-methyl-D-erythritol 4-phosphate cytidylyltransferase from Photorhabdus laumondii subsp. laumondii (strain DSM 15139 / CIP 105565 / TT01) (Photorhabdus luminescens subsp. laumondii).